The following is a 231-amino-acid chain: MLTRKQHELLVYIDQHLRRTGCSPSFEEMKEALDLKSKSGIHRLIGALEERGFLRRHKHRARALEVLRLPSDAAADRPDTGFAPNVIRGDFTARLQGARAADPAAAITLPLYGRIAAGQPIEALREHQAEIEIPASLVGPGEHYALEVAGDSMVDAGILDGDTAIIRRGETAETGQIVVALIDDVEVTLKRLRRRGNSTALEPANPRYEIRIFPAERVKVQGRLVALFRRY.

The H-T-H motif DNA-binding region spans 26–46 (FEEMKEALDLKSKSGIHRLIG). Catalysis depends on for autocatalytic cleavage activity residues Ser-152 and Lys-190.

It belongs to the peptidase S24 family. In terms of assembly, homodimer.

The enzyme catalyses Hydrolysis of Ala-|-Gly bond in repressor LexA.. Represses a number of genes involved in the response to DNA damage (SOS response), including recA and lexA. In the presence of single-stranded DNA, RecA interacts with LexA causing an autocatalytic cleavage which disrupts the DNA-binding part of LexA, leading to derepression of the SOS regulon and eventually DNA repair. This is LexA repressor from Acidiphilium cryptum (strain JF-5).